Reading from the N-terminus, the 375-residue chain is uncharacterized protein (375 aa).

Belongs to the IMPDH/GMPR family.

This is an uncharacterized protein from Mycobacterium leprae (strain TN).